A 426-amino-acid chain; its full sequence is Mannose-6-phosphate isomerase (426 aa).

Positions 112, 114, 139, and 277 each coordinate Zn(2+). Residue Arg-296 is part of the active site.

Belongs to the mannose-6-phosphate isomerase type 1 family. Requires Zn(2+) as cofactor.

Its subcellular location is the cytoplasm. It carries out the reaction D-mannose 6-phosphate = D-fructose 6-phosphate. The protein operates within nucleotide-sugar biosynthesis; GDP-alpha-D-mannose biosynthesis; alpha-D-mannose 1-phosphate from D-fructose 6-phosphate: step 1/2. Involved in the synthesis of the GDP-mannose and dolichol-phosphate-mannose required for a number of critical mannosyl transfer reactions. In Ogataea parapolymorpha (strain ATCC 26012 / BCRC 20466 / JCM 22074 / NRRL Y-7560 / DL-1) (Yeast), this protein is Mannose-6-phosphate isomerase (PMI40).